The sequence spans 696 residues: Glycine--tRNA ligase beta subunit (696 aa).

This sequence belongs to the class-II aminoacyl-tRNA synthetase family. Tetramer of two alpha and two beta subunits.

The protein resides in the cytoplasm. The enzyme catalyses tRNA(Gly) + glycine + ATP = glycyl-tRNA(Gly) + AMP + diphosphate. In Aromatoleum aromaticum (strain DSM 19018 / LMG 30748 / EbN1) (Azoarcus sp. (strain EbN1)), this protein is Glycine--tRNA ligase beta subunit.